The chain runs to 199 residues: Secreted chorismate mutase (199 aa).

The signal sequence occupies residues 1 to 33; that stretch reads MLTRPREIYLATAVSIGILLSLIAPLGPPLARA. In terms of domain architecture, Chorismate mutase spans 34 to 113; sequence DGTSQLAELV…ATEAIEYSRF (80 aa). Residues Arg49, Lys60, Asp69, 72–76, 105–109, and Arg134 each bind substrate; these read RVEQQ and TEAIE. Cys160 and Cys193 are disulfide-bonded.

Homodimer.

It is found in the secreted. It catalyses the reaction chorismate = prephenate. The protein operates within metabolic intermediate biosynthesis; prephenate biosynthesis; prephenate from chorismate: step 1/1. With respect to regulation, tyrosine, phenylalanine, and tryptophan moderately enhance chorismate mutase activity at low concentrations, but allosterically inhibit the enzyme at higher concentrations. Its function is as follows. Catalyzes the Claisen rearrangement of chorismate to prephenate. May play some role in the pathogenicity. The sequence is that of Secreted chorismate mutase from Mycobacterium tuberculosis (strain ATCC 25618 / H37Rv).